A 209-amino-acid polypeptide reads, in one-letter code: Uracil phosphoribosyltransferase (209 aa).

5-phospho-alpha-D-ribose 1-diphosphate contacts are provided by residues Arg-79, Arg-104, and 131-139; that span reads DPMLATGVS. Residues Ile-194 and 199–201 contribute to the uracil site; that span reads GDA. Asp-200 contributes to the 5-phospho-alpha-D-ribose 1-diphosphate binding site.

Belongs to the UPRTase family. Requires Mg(2+) as cofactor.

It carries out the reaction UMP + diphosphate = 5-phospho-alpha-D-ribose 1-diphosphate + uracil. It participates in pyrimidine metabolism; UMP biosynthesis via salvage pathway; UMP from uracil: step 1/1. Its activity is regulated as follows. Allosterically activated by GTP. In terms of biological role, catalyzes the conversion of uracil and 5-phospho-alpha-D-ribose 1-diphosphate (PRPP) to UMP and diphosphate. The protein is Uracil phosphoribosyltransferase of Thermotoga maritima (strain ATCC 43589 / DSM 3109 / JCM 10099 / NBRC 100826 / MSB8).